The primary structure comprises 200 residues: Large ribosomal subunit protein uL4 (200 aa).

Positions Arg43 to Ala67 are disordered.

The protein belongs to the universal ribosomal protein uL4 family. As to quaternary structure, part of the 50S ribosomal subunit.

One of the primary rRNA binding proteins, this protein initially binds near the 5'-end of the 23S rRNA. It is important during the early stages of 50S assembly. It makes multiple contacts with different domains of the 23S rRNA in the assembled 50S subunit and ribosome. Its function is as follows. Forms part of the polypeptide exit tunnel. The sequence is that of Large ribosomal subunit protein uL4 from Haemophilus influenzae (strain PittEE).